The following is a 376-amino-acid chain: WW domain-binding protein 4 (376 aa).

The Matrin-type zinc finger occupies 11 to 42 (KFCDYCKCWIADNRPSVEFHERGKNHKENVAK). The span at 94 to 107 (ITPVTSTIPPTSTS) shows a compositional bias: low complexity. Disordered stretches follow at residues 94 to 128 (ITPV…KGRW), 189 to 335 (SRWE…EPKV), and 356 to 376 (FKKR…GDDQ). 2 WW domains span residues 122–155 (DPSK…KPEG) and 163–196 (TAVK…KPDD). Basic and acidic residues predominate over residues 189–198 (SRWEKPDDFI). Residues 203–215 (DLPSSKVNENSLG) are compositionally biased toward polar residues. Composition is skewed to basic and acidic residues over residues 218–229 (DESKSSDSHSDS) and 243–257 (ETEK…KNKN). Serine 220, serine 227, and serine 229 each carry phosphoserine. Residue serine 262 is modified to Phosphoserine. The segment covering 298–309 (QEIKQEVESHEE) has biased composition (basic and acidic residues). Residues 316–326 (STENEYVSTSE) show a composition bias toward polar residues. The tract at residues 357-375 (KKRRTENGKSRNLRQRGDD) is interaction with SNRNP200. Positions 361 to 376 (TENGKSRNLRQRGDDQ) are enriched in basic and acidic residues.

As to quaternary structure, component of the spliceosome B complex. Associated with U2 snRNPs. Binds splicing factors SNRPB, SNRPC and SF1. Interacts via the WW domains with the Pro-rich domains of KHDRBS1/SAM68. Interacts via the WW domains with the Pro-rich domains of WBP11. Interacts with SNRNP200.

Its subcellular location is the nucleus. The protein resides in the nucleus speckle. Involved in pre-mRNA splicing as a component of the spliceosome. May play a role in cross-intron bridging of U1 and U2 snRNPs in the mammalian A complex. The chain is WW domain-binding protein 4 (WBP4) from Homo sapiens (Human).